The primary structure comprises 496 residues: Cobyric acid synthase (496 aa).

One can recognise a GATase cobBQ-type domain in the interval 258–427; the sequence is TLTVAAIRLP…WHGLLDNDAL (170 aa). The active-site Nucleophile is the C339. The active site involves H419.

Belongs to the CobB/CobQ family. CobQ subfamily.

Its pathway is cofactor biosynthesis; adenosylcobalamin biosynthesis. Catalyzes amidations at positions B, D, E, and G on adenosylcobyrinic A,C-diamide. NH(2) groups are provided by glutamine, and one molecule of ATP is hydrogenolyzed for each amidation. This chain is Cobyric acid synthase, found in Mycolicibacterium smegmatis (strain ATCC 700084 / mc(2)155) (Mycobacterium smegmatis).